The following is a 552-amino-acid chain: Putative transport protein YPN_3727 (552 aa).

6 consecutive transmembrane segments (helical) span residues 1-21 (MSAI…GLWI), 26-46 (IYGV…VGHF), 65-85 (FGLI…FFSS), 96-116 (FAIL…KLFA), 119-139 (LPII…LGAA), and 158-178 (MGYA…MWLI). 2 consecutive RCK C-terminal domains span residues 192 to 276 (AFDS…VVGE) and 279 to 361 (DVTL…IVGN). The next 6 membrane-spanning stretches (helical) occupy residues 371–391 (MLPV…PLFV), 393–413 (GFPA…ALIL), 439–459 (IVLF…NTLV), 464–484 (LAWI…VGIL), 493–513 (YLTL…LAFA), and 530–550 (VYPL…VLFW).

It belongs to the AAE transporter (TC 2.A.81) family. YidE subfamily.

The protein localises to the cell membrane. The chain is Putative transport protein YPN_3727 from Yersinia pestis bv. Antiqua (strain Nepal516).